Here is a 622-residue protein sequence, read N- to C-terminus: Iron transport multicopper oxidase FET3 (622 aa).

Residues 1–22 (MRPKLLSVEAALFLALPELARA) form the signal peptide. The Extracellular portion of the chain corresponds to 23-553 (ATRKFDFEIG…NTLPPGFTPR (531 aa)). 3 Plastocyanin-like domains span residues 31–146 (IGWV…VHDK), 156–303 (EEVV…VYDK), and 363–498 (YTEA…VEDP). An N-linked (GlcNAc...) asparagine glycan is attached at asparagine 76. 2 residues coordinate Cu cation: histidine 82 and histidine 84. 2 N-linked (GlcNAc...) asparagine glycosylation sites follow: asparagine 89 and asparagine 114. 2 residues coordinate Cu cation: histidine 126 and histidine 128. N-linked (GlcNAc...) asparagine glycans are attached at residues asparagine 196, asparagine 200, and asparagine 294. Cu cation-binding residues include histidine 414, histidine 417, and histidine 419. Asparagine 440 carries N-linked (GlcNAc...) asparagine glycosylation. Cu cation-binding residues include histidine 479, cysteine 480, histidine 481, and histidine 485. Residues 554-574 (GIVALVFSCICGILGVAVVAW) traverse the membrane as a helical segment. At 575–622 (YGFSAPVGSTSAGALSAGLVENDSGDVHSAQKGPQETVVSPTGDARSH) the chain is on the cytoplasmic side. The segment at 597-622 (DSGDVHSAQKGPQETVVSPTGDARSH) is disordered.

Belongs to the multicopper oxidase family.

The protein resides in the cell membrane. Functionally, cell surface ferroxidase; part of the reductive iron assimilatory system (RIA), a siderophore-independent iron acquisition process. Required to oxidize Fe(2+) and release it from the transporter. Seems not to be involved in virulence. The sequence is that of Iron transport multicopper oxidase FET3 from Gibberella zeae (strain ATCC MYA-4620 / CBS 123657 / FGSC 9075 / NRRL 31084 / PH-1) (Wheat head blight fungus).